The following is a 305-amino-acid chain: Nod factor export ATP-binding protein I (305 aa).

The ABC transporter domain occupies 8–237 (IDLVGVRKSF…HIGCNVIEIY (230 aa)). Residue 40 to 47 (GPNGAGKS) participates in ATP binding.

This sequence belongs to the ABC transporter superfamily. Lipooligosaccharide exporter (TC 3.A.1.102) family. As to quaternary structure, the complex is composed of two ATP-binding proteins (NodI) and two transmembrane proteins (NodJ).

It localises to the cell inner membrane. Part of the ABC transporter complex NodIJ involved in the export of the nodulation factors (Nod factors), the bacterial signal molecules that induce symbiosis and subsequent nodulation induction. Nod factors are LCO (lipo-chitin oligosaccharide), a modified beta-1,4-linked N-acetylglucosamine oligosaccharide. This subunit is responsible for energy coupling to the transport system. The polypeptide is Nod factor export ATP-binding protein I (Bradyrhizobium sp. (strain SNU001)).